Here is a 144-residue protein sequence, read N- to C-terminus: MPKVRRSRKPPPEGWELIEPTLDELDQKMREAETEPHEGKRKVEALWPIFKIHHQKSRYIFDLFYRRKAISRELYEYCLKEGIADKNLIAKWKKQGYENLCCLRCIQTRDTNFGTNCICRVPKSKLEEGRIVECVHCGCRGCSG.

Residues 2–10 (PKVRRSRKP) carry the Nuclear localization signal motif.

It belongs to the BUD31 (G10) family.

The protein resides in the nucleus. This Branchiostoma belcheri (Amphioxus) protein is Protein BUD31 homolog.